We begin with the raw amino-acid sequence, 404 residues long: Deoxyguanosinetriphosphate triphosphohydrolase-like protein (404 aa).

The disordered stretch occupies residues 1–32 (MAVGMAAPHATYASDPARSRGRLFDEPPSKTR). Residues 22–32 (RLFDEPPSKTR) are compositionally biased toward basic and acidic residues. The HD domain maps to 69–217 (RLTHTLEVAQ…AAIADDIAYD (149 aa)).

It belongs to the dGTPase family. Type 2 subfamily.

The protein is Deoxyguanosinetriphosphate triphosphohydrolase-like protein of Nitrobacter hamburgensis (strain DSM 10229 / NCIMB 13809 / X14).